We begin with the raw amino-acid sequence, 216 residues long: MNKINIAIDGPAAAGKSTIAKRVAEALSMIYVDTGAMYRAITLAHLEQPETEIDKLVDHIDLKLVNRSGQRIYLNGSDVSDRIREHDVTLNVSRIASIESVRTKLVNLQQNMTANKGVVMDGRDIGTKVIPEAELKVYMVASVEERAERRLIDNRNRGIASTFEELKRDIERRDHLDMTREISPLTKAEDAIEIDTTGKSIEEVTAQIIELAKSAM.

10–18 (GPAAAGKST) contacts ATP.

This sequence belongs to the cytidylate kinase family. Type 1 subfamily.

The protein localises to the cytoplasm. The enzyme catalyses CMP + ATP = CDP + ADP. It catalyses the reaction dCMP + ATP = dCDP + ADP. The sequence is that of Cytidylate kinase from Macrococcus caseolyticus (strain JCSC5402) (Macrococcoides caseolyticum).